The following is a 403-amino-acid chain: D-galactonate dehydratase family member RspA (403 aa).

2 residues coordinate substrate: Asn-37 and His-122. Tyr-159 serves as the catalytic Proton donor/acceptor. Residue Asp-211 participates in Mg(2+) binding. The active-site Proton donor/acceptor is the His-213. The Mg(2+) site is built by Glu-237 and Glu-263. 5 residues coordinate substrate: Glu-263, Arg-284, His-313, Asp-317, and Glu-340.

The protein belongs to the mandelate racemase/muconate lactonizing enzyme family. GalD subfamily. The cofactor is Mg(2+).

The catalysed reaction is D-mannonate = 2-dehydro-3-deoxy-D-gluconate + H2O. It carries out the reaction D-gluconate = 2-dehydro-3-deoxy-D-gluconate + H2O. In terms of biological role, has low dehydratase activity with D-mannonate and D-gluconate, suggesting that these are not physiological substrates and that it has no significant role in the in vivo degradation of these compounds. Has no detectable activity with a panel of 70 other acid sugars (in vitro). This Halomonas elongata (strain ATCC 33173 / DSM 2581 / NBRC 15536 / NCIMB 2198 / 1H9) protein is D-galactonate dehydratase family member RspA (rspA).